We begin with the raw amino-acid sequence, 461 residues long: Cysteine--tRNA ligase (461 aa).

Cys-28 is a binding site for Zn(2+). Positions 30–40 (ITVYDLCHIGH) match the 'HIGH' region motif. Residues Cys-209, His-234, and Glu-238 each coordinate Zn(2+). Residues 266-270 (KMSKS) carry the 'KMSKS' region motif. Residue Lys-269 coordinates ATP.

This sequence belongs to the class-I aminoacyl-tRNA synthetase family. In terms of assembly, monomer. It depends on Zn(2+) as a cofactor.

It localises to the cytoplasm. It carries out the reaction tRNA(Cys) + L-cysteine + ATP = L-cysteinyl-tRNA(Cys) + AMP + diphosphate. This Pectobacterium carotovorum subsp. carotovorum (strain PC1) protein is Cysteine--tRNA ligase.